Consider the following 315-residue polypeptide: Transposase for insertion sequence element IS640 (315 aa).

One can recognise an HTH IS21-type domain in the interval 5-66 (EDFYMIKQMR…PFMDYIDMRL (62 aa)). Residues 111-285 (FETQPGYQLQ…TPEQRSRWSR (175 aa)) form the Integrase catalytic domain.

The protein belongs to the transposase IS21/IS408/IS1162 family.

Involved in the transposition of the insertion sequence. The sequence is that of Transposase for insertion sequence element IS640 (istA) from Shigella sonnei.